The chain runs to 483 residues: GTPase Der (483 aa).

2 consecutive EngA-type G domains span residues 3-167 (FTLA…GEER) and 212-387 (LRIA…EIWN). Residues 9–16 (GRPNVGKS), 56–60 (DTAGL), 119–122 (NKAE), 218–225 (GRPNAGKS), 265–269 (DTAGM), and 330–333 (NKWD) contribute to the GTP site. The KH-like domain maps to 388–472 (RRISTGRLNR…PIRLSLRTSD (85 aa)).

The protein belongs to the TRAFAC class TrmE-Era-EngA-EngB-Septin-like GTPase superfamily. EngA (Der) GTPase family. In terms of assembly, associates with the 50S ribosomal subunit.

In terms of biological role, GTPase that plays an essential role in the late steps of ribosome biogenesis. The protein is GTPase Der of Brucella ovis (strain ATCC 25840 / 63/290 / NCTC 10512).